The following is a 708-amino-acid chain: F-box protein MAX2 homolog A (708 aa).

Residues 2–49 (ATQLNDLPDVILSNIIAAVTDVRSRNSTSFVCRKWLVLERSTRVSLTL) form the F-box domain.

As to quaternary structure, part of a putative SCF (SKP1/Cullin/F-box) ubiquitin ligase complex. Interacts with DAD2. Interacts with KAI2IA in the presence of (-)-germacrene D. As to expression, mainly expressed in fully expanded leaves, lateral roots, axillary and shoot apex, and, to a lower extent, in internodes and nodes.

It is found in the nucleus. Functionally, component of SCF(ASK-cullin-F-box) E3 ubiquitin ligase complexes, which may mediate the ubiquitination and subsequent proteasomal degradation of target proteins. Is necessary for responses to strigolactones and may be involved in the ubiquitin-mediated degradation of specific proteins that activate axillary growth. Targets probably SMAX1A to degradation upon the formation of an E3 SCF ubiquitin ligase complex (ASK-cullin-F-box) containing MAX2A and KAI2IA in response to (-)-germacrene D in the stigma. This chain is F-box protein MAX2 homolog A, found in Petunia hybrida (Petunia).